A 290-amino-acid chain; its full sequence is Ribosomal protein L11 methyltransferase (290 aa).

S-adenosyl-L-methionine-binding residues include Thr135, Gly158, Asp180, and Asn227.

The protein belongs to the methyltransferase superfamily. PrmA family.

It localises to the cytoplasm. The enzyme catalyses L-lysyl-[protein] + 3 S-adenosyl-L-methionine = N(6),N(6),N(6)-trimethyl-L-lysyl-[protein] + 3 S-adenosyl-L-homocysteine + 3 H(+). In terms of biological role, methylates ribosomal protein L11. The polypeptide is Ribosomal protein L11 methyltransferase (Chelativorans sp. (strain BNC1)).